The following is a 734-amino-acid chain: Translation initiation factor IF-2 (734 aa).

The tract at residues 39-110 is disordered; that stretch reads SKFAPRSSFT…TGKPETKKRE (72 aa). Residues 82-110 show a composition bias toward basic and acidic residues; it reads DYEKRKLAEQRATRRLKGDTGKPETKKRE. The tr-type G domain maps to 238-405; sequence NRPPIVTVMG…SIVLQAEILD (168 aa). Positions 247–254 are G1; sequence GHVDHGKT. 247 to 254 contacts GTP; that stretch reads GHVDHGKT. The interval 272 to 276 is G2; it reads GITQH. Residues 293–296 are G3; it reads DTPG. GTP contacts are provided by residues 293–297 and 347–350; these read DTPGH and NKCD. A G4 region spans residues 347–350; it reads NKCD. A G5 region spans residues 383–385; it reads SAK.

This sequence belongs to the TRAFAC class translation factor GTPase superfamily. Classic translation factor GTPase family. IF-2 subfamily.

It localises to the cytoplasm. In terms of biological role, one of the essential components for the initiation of protein synthesis. Protects formylmethionyl-tRNA from spontaneous hydrolysis and promotes its binding to the 30S ribosomal subunits. Also involved in the hydrolysis of GTP during the formation of the 70S ribosomal complex. In Pelagibacter ubique (strain HTCC1062), this protein is Translation initiation factor IF-2.